The chain runs to 891 residues: Translation initiation factor IF-2 (891 aa).

The interval 50–303 (KKEHGSADES…TSMQHGFDKS (254 aa)) is disordered. 2 stretches are compositionally biased toward basic and acidic residues: residues 102–237 (TLEE…KTAD) and 245–261 (HARE…EQQP). One can recognise a tr-type G domain in the interval 390–559 (GRAPVVTIMG…LLQSEVLELT (170 aa)). Residues 399-406 (GHVDHGKT) are G1. Residue 399-406 (GHVDHGKT) coordinates GTP. Residues 424–428 (GITQH) form a G2 region. A G3 region spans residues 445 to 448 (DTPG). Residues 445 to 449 (DTPGH) and 499 to 502 (NKID) each bind GTP. The interval 499–502 (NKID) is G4. The interval 535–537 (SAK) is G5.

Belongs to the TRAFAC class translation factor GTPase superfamily. Classic translation factor GTPase family. IF-2 subfamily.

The protein resides in the cytoplasm. Its function is as follows. One of the essential components for the initiation of protein synthesis. Protects formylmethionyl-tRNA from spontaneous hydrolysis and promotes its binding to the 30S ribosomal subunits. Also involved in the hydrolysis of GTP during the formation of the 70S ribosomal complex. This Aliivibrio salmonicida (strain LFI1238) (Vibrio salmonicida (strain LFI1238)) protein is Translation initiation factor IF-2.